The chain runs to 281 residues: Diaminopimelate epimerase (281 aa).

Residues N13, Q46, and N66 each coordinate substrate. Residue C75 is the Proton donor of the active site. Substrate contacts are provided by residues 76-77 (GN), N160, N193, and 211-212 (ER). The active-site Proton acceptor is the C220. 221 to 222 (GT) provides a ligand contact to substrate.

Belongs to the diaminopimelate epimerase family. As to quaternary structure, homodimer.

The protein localises to the cytoplasm. The enzyme catalyses (2S,6S)-2,6-diaminopimelate = meso-2,6-diaminopimelate. It participates in amino-acid biosynthesis; L-lysine biosynthesis via DAP pathway; DL-2,6-diaminopimelate from LL-2,6-diaminopimelate: step 1/1. Catalyzes the stereoinversion of LL-2,6-diaminopimelate (L,L-DAP) to meso-diaminopimelate (meso-DAP), a precursor of L-lysine and an essential component of the bacterial peptidoglycan. This Acinetobacter baumannii (strain AB307-0294) protein is Diaminopimelate epimerase.